Here is a 544-residue protein sequence, read N- to C-terminus: Ribosomal protein S6 kinase-like 1 (544 aa).

Residues 87-115 (VHVDPNKERREAVKLKITKYLRRAEEIFN) enclose the MIT domain. The region spanning 145–534 (SALEQLKGCR…TSRLKSHPFF (390 aa)) is the Protein kinase domain. ATP is bound by residues 151 to 159 (KGCRVVGII) and K177. 2 disordered regions span residues 262-344 (PAEL…HWVR) and 353-372 (AYGRGRGRNPPSANRASLGS). Polar residues predominate over residues 303–313 (SRPSAVFSSDP). Catalysis depends on D407, which acts as the Proton acceptor.

This sequence belongs to the protein kinase superfamily. Ser/Thr protein kinase family. S6 kinase subfamily.

The catalysed reaction is L-seryl-[protein] + ATP = O-phospho-L-seryl-[protein] + ADP + H(+). The enzyme catalyses L-threonyl-[protein] + ATP = O-phospho-L-threonyl-[protein] + ADP + H(+). The protein is Ribosomal protein S6 kinase-like 1 (Rps6kl1) of Mus musculus (Mouse).